Here is a 502-residue protein sequence, read N- to C-terminus: ATP synthase subunit alpha (502 aa).

The disordered stretch occupies residues 115–139; it reads VDGLGPVETTETRPIESPAPGVMDR. 169–176 lines the ATP pocket; sequence GDRQTGKT.

This sequence belongs to the ATPase alpha/beta chains family. In terms of assembly, F-type ATPases have 2 components, CF(1) - the catalytic core - and CF(0) - the membrane proton channel. CF(1) has five subunits: alpha(3), beta(3), gamma(1), delta(1), epsilon(1). CF(0) has three main subunits: a(1), b(2) and c(9-12). The alpha and beta chains form an alternating ring which encloses part of the gamma chain. CF(1) is attached to CF(0) by a central stalk formed by the gamma and epsilon chains, while a peripheral stalk is formed by the delta and b chains.

The protein resides in the cell membrane. The catalysed reaction is ATP + H2O + 4 H(+)(in) = ADP + phosphate + 5 H(+)(out). Functionally, produces ATP from ADP in the presence of a proton gradient across the membrane. The alpha chain is a regulatory subunit. The polypeptide is ATP synthase subunit alpha (Geobacillus thermodenitrificans (strain NG80-2)).